Consider the following 177-residue polypeptide: Nucleoside triphosphate/diphosphate phosphatase (177 aa).

Arg-23 functions as the Proton donor in the catalytic mechanism. The Mg(2+) site is built by Asn-87, Asp-103, Asp-105, Asp-107, Asp-120, and Glu-123.

Belongs to the Ntdp family. The cofactor is Mg(2+).

The catalysed reaction is a ribonucleoside 5'-triphosphate + H2O = a ribonucleoside 5'-diphosphate + phosphate + H(+). It carries out the reaction a ribonucleoside 5'-diphosphate + H2O = a ribonucleoside 5'-phosphate + phosphate + H(+). Functionally, has nucleoside phosphatase activity towards nucleoside triphosphates and nucleoside diphosphates. The chain is Nucleoside triphosphate/diphosphate phosphatase from Streptococcus gordonii (strain Challis / ATCC 35105 / BCRC 15272 / CH1 / DL1 / V288).